The chain runs to 423 residues: Imidazolonepropionase (423 aa).

Fe(3+) is bound by residues histidine 78 and histidine 80. Residues histidine 78 and histidine 80 each contribute to the Zn(2+) site. 4-imidazolone-5-propanoate contacts are provided by arginine 87, tyrosine 150, and histidine 183. Residue tyrosine 150 participates in N-formimidoyl-L-glutamate binding. Histidine 247 serves as a coordination point for Fe(3+). Residue histidine 247 participates in Zn(2+) binding. 4-imidazolone-5-propanoate is bound at residue glutamate 250. Aspartate 322 is a Fe(3+) binding site. Residue aspartate 322 participates in Zn(2+) binding. Residues asparagine 324 and glycine 326 each coordinate N-formimidoyl-L-glutamate. 4-imidazolone-5-propanoate is bound at residue serine 327.

Belongs to the metallo-dependent hydrolases superfamily. HutI family. It depends on Zn(2+) as a cofactor. The cofactor is Fe(3+).

The protein localises to the cytoplasm. It catalyses the reaction 4-imidazolone-5-propanoate + H2O = N-formimidoyl-L-glutamate. It participates in amino-acid degradation; L-histidine degradation into L-glutamate; N-formimidoyl-L-glutamate from L-histidine: step 3/3. In terms of biological role, catalyzes the hydrolytic cleavage of the carbon-nitrogen bond in imidazolone-5-propanoate to yield N-formimidoyl-L-glutamate. It is the third step in the universal histidine degradation pathway. This chain is Imidazolonepropionase, found in Bacillus cereus (strain ATCC 14579 / DSM 31 / CCUG 7414 / JCM 2152 / NBRC 15305 / NCIMB 9373 / NCTC 2599 / NRRL B-3711).